The chain runs to 436 residues: DEAD-box ATP-dependent RNA helicase CshB (436 aa).

The short motif at 4-32 is the Q motif element; the sequence is QTFTQYDFKPFLIDAVRELRFTEPTGIQQ. The 175-residue stretch at 35–209 folds into the Helicase ATP-binding domain; it reads FPVVKKGVSV…KKYMENPEHI (175 aa). Residue 48–55 participates in ATP binding; that stretch reads SQTGSGKT. Positions 157 to 160 match the DEAD box motif; sequence DEAD. In terms of domain architecture, Helicase C-terminal spans 240–388; it reads MLLQFKPYLA…WADLGERRRR (149 aa). The disordered stretch occupies residues 385–436; that stretch reads RRRRKSRKKPNDELDVMATKVIKKPKKVKPNYKRKLATERDKVKRKYSNKKR. Basic residues-rich tracts occupy residues 405–419 and 427–436; these read VIKKPKKVKPNYKRK and VKRKYSNKKR.

It belongs to the DEAD box helicase family. CshB subfamily.

The protein resides in the cytoplasm. It carries out the reaction ATP + H2O = ADP + phosphate + H(+). Functionally, probable DEAD-box RNA helicase. May work in conjunction with the cold shock proteins to ensure proper initiation of transcription at low and optimal temperatures. Unwinds dsRNA in both 5'- and 3'-directions and shows RNA-dependent ATPase activity. Probably has a somewhat redundant function with CshA, as cshA can partially complement the growth effects of a cshB deletion. In Bacillus cereus (strain ATCC 14579 / DSM 31 / CCUG 7414 / JCM 2152 / NBRC 15305 / NCIMB 9373 / NCTC 2599 / NRRL B-3711), this protein is DEAD-box ATP-dependent RNA helicase CshB.